Consider the following 308-residue polypeptide: Glutaminase (308 aa).

Substrate-binding residues include Ser-66, Asn-117, Glu-161, Asn-168, Tyr-192, Tyr-244, and Val-262.

The protein belongs to the glutaminase family. In terms of assembly, homotetramer.

It catalyses the reaction L-glutamine + H2O = L-glutamate + NH4(+). This Klebsiella pneumoniae subsp. pneumoniae (strain ATCC 700721 / MGH 78578) protein is Glutaminase.